Here is a 125-residue protein sequence, read N- to C-terminus: Protein ApaG (125 aa).

Positions 1–125 (MFTSSKVAIQ…FRLAIPTLIN (125 aa)) constitute an ApaG domain.

This chain is Protein ApaG, found in Proteus mirabilis (strain HI4320).